The primary structure comprises 165 residues: RNA pyrophosphohydrolase (165 aa).

A Nudix hydrolase domain is found at 6 to 149 (GYRPNVGIII…KQSVYHQALT (144 aa)). The short motif at 38–59 (GGVRENETPQQAVFRELKEEVG) is the Nudix box element.

This sequence belongs to the Nudix hydrolase family. RppH subfamily. A divalent metal cation is required as a cofactor.

In terms of biological role, accelerates the degradation of transcripts by removing pyrophosphate from the 5'-end of triphosphorylated RNA, leading to a more labile monophosphorylated state that can stimulate subsequent ribonuclease cleavage. The chain is RNA pyrophosphohydrolase from Hydrogenovibrio crunogenus (strain DSM 25203 / XCL-2) (Thiomicrospira crunogena).